The chain runs to 246 residues: Agamous-like MADS-box protein AGL5 (246 aa).

In terms of domain architecture, MADS-box spans 18-72; sequence RGKIEIKRIENTTNRQVTFCKRRNGLLKKAYELSVLCDAEVALVIFSTRGRLYEY. Residues 102–192 form the K-box domain; it reads TQYYQQEASK…RSKITERTGL (91 aa).

In terms of assembly, interacts with AGL15 and AGL16.

The protein resides in the nucleus. Functionally, probable transcription factor. Interacts genetically with TT16/AGL32 in a partially antagonistic manner during flower development. Is essential for the coordination of cell divisions in ovule, seed coat development and endosperm formation. The chain is Agamous-like MADS-box protein AGL5 (AGL5) from Arabidopsis thaliana (Mouse-ear cress).